The following is a 188-amino-acid chain: Guanylate kinase (188 aa).

Residues 8–188 (GRIVVLAGPS…AVAAISEILR (181 aa)) enclose the Guanylate kinase-like domain. Residue 15–22 (GPSAVGKS) participates in ATP binding.

The protein belongs to the guanylate kinase family.

It is found in the cytoplasm. It carries out the reaction GMP + ATP = GDP + ADP. In terms of biological role, essential for recycling GMP and indirectly, cGMP. The protein is Guanylate kinase of Corynebacterium jeikeium (strain K411).